Here is a 367-residue protein sequence, read N- to C-terminus: Cytochrome-c peroxidase IdrP2 (367 aa).

The signal sequence occupies residues 1 to 28 (MTTHQSIRRLSRIAALVGLAFVAGTVAA). 2 Cytochrome c domains span residues 47-157 (DMVE…AMWQ) and 200-345 (SQQK…EALS). Heme c contacts are provided by C69, C72, H73, C215, C218, and H219.

As to quaternary structure, the iodate reductase (Idr) complex is composed of a molybdopterin-dependent iodate reductase (IdrA and IdrB subunits) and two associated peroxidases (IdrP1 and IdrP2). Heme c is required as a cofactor.

It localises to the periplasm. The catalysed reaction is 2 Fe(II)-[cytochrome c] + H2O2 + 2 H(+) = 2 Fe(III)-[cytochrome c] + 2 H2O. Its function is as follows. Involved in iodate respiration. May play a critical role in detoxification of inadvertent H(2)O(2) generated by the iodate reductase IdrA/IdrB. This chain is Cytochrome-c peroxidase IdrP2, found in Denitromonas iodatirespirans.